Consider the following 34-residue polypeptide: Potassium channel toxin alpha-KTx 6.13 (34 aa).

4 cysteine pairs are disulfide-bonded: Cys3–Cys24, Cys9–Cys29, Cys13–Cys31, and Cys19–Cys34. Cys34 carries the cysteine amide modification.

It belongs to the short scorpion toxin superfamily. Potassium channel inhibitor family. Alpha-KTx 06 subfamily. In terms of tissue distribution, expressed by the venom gland.

It localises to the secreted. Functionally, antagonist of Kv1/KCNA potassium channels. Shows a weak interaction with muscle-type nicotinic acetylcholine receptors (nAChR), since it inhibits alpha-bungarotoxin binding to both muscle-type nAChR from T.californica (IC(50)=490 nM). This suggests it probably weakly inhibits nAChR. The polypeptide is Potassium channel toxin alpha-KTx 6.13 (Heterometrus spinifer (Asia giant forest scorpion)).